A 1362-amino-acid polypeptide reads, in one-letter code: DNA-directed RNA polymerase subunit beta (1362 aa).

This sequence belongs to the RNA polymerase beta chain family. In terms of assembly, the RNAP catalytic core consists of 2 alpha, 1 beta, 1 beta' and 1 omega subunit. When a sigma factor is associated with the core the holoenzyme is formed, which can initiate transcription.

It carries out the reaction RNA(n) + a ribonucleoside 5'-triphosphate = RNA(n+1) + diphosphate. Its function is as follows. DNA-dependent RNA polymerase catalyzes the transcription of DNA into RNA using the four ribonucleoside triphosphates as substrates. This chain is DNA-directed RNA polymerase subunit beta, found in Acidithiobacillus ferrooxidans (strain ATCC 23270 / DSM 14882 / CIP 104768 / NCIMB 8455) (Ferrobacillus ferrooxidans (strain ATCC 23270)).